Consider the following 832-residue polypeptide: AP-1 complex subunit gamma-1 (832 aa).

Residues 733–832 (LNVYASLLSA…QFDHKFDETL (100 aa)) enclose the GAE domain.

As to quaternary structure, adapter protein complex 1 (AP-1) is a heterotetramer composed of two large adaptins (gamma-type subunit APL4 and beta-type subunit APL2), a medium adaptin (mu-type subunit APM1) and a small adaptin (sigma-type subunit APS1). AP-1 interacts with clathrin. Also a component of the AP-1R complex composed of at least APM2, APL4 and APS1.

Its subcellular location is the cytoplasm. The protein resides in the golgi apparatus membrane. It localises to the cytoplasmic vesicle. It is found in the clathrin-coated vesicle membrane. Adaptins are components of the adapter complexes which link clathrin to receptors in coated vesicles. Clathrin-associated protein complexes are believed to interact with the cytoplasmic tails of membrane proteins, leading to their selection and concentration. The AP-1 complex interacts directly with clathrin. Component of the AP-1-related (AP-1R) complex, an adapter protein complex that mediates sorting of cargo SNARE SNC1. In contrast to the APM1-containing AP-1 complex, AP-1R is incapable of sorting CHS3. This is AP-1 complex subunit gamma-1 (APL4) from Saccharomyces cerevisiae (strain ATCC 204508 / S288c) (Baker's yeast).